The following is a 478-amino-acid chain: Methionine aminopeptidase 2 (478 aa).

The interval 1-122 (MAGVEQAASF…TDPPSVPICD (122 aa)) is disordered. A2 is modified (N-acetylalanine). The segment covering 36–46 (KKKRRKKKKGK) has biased composition (basic residues). Phosphoserine; alternate is present on S60. Residue S60 is glycosylated (O-linked (GlcNAc) serine; alternate). Residues 80–92 (ERDDDDEDGDGDA) are compositionally biased toward acidic residues. The segment covering 97–109 (GKKKKKKKKKRGP) has biased composition (basic residues). Residue H231 participates in substrate binding. Residues D251, D262, and H331 each coordinate a divalent metal cation. H339 serves as a coordination point for substrate. Residues E364 and E459 each coordinate a divalent metal cation.

This sequence belongs to the peptidase M24A family. Methionine aminopeptidase eukaryotic type 2 subfamily. Binds EIF2S1 at low magnesium concentrations. Interacts strongly with the eIF-2 gamma-subunit EIF2S3. Requires Co(2+) as cofactor. It depends on Zn(2+) as a cofactor. The cofactor is Mn(2+). Fe(2+) serves as cofactor. Contains approximately 12 O-linked N-acetylglucosamine (GlcNAc) residues. O-glycosylation is required for EIF2S1 binding.

It is found in the cytoplasm. The enzyme catalyses Release of N-terminal amino acids, preferentially methionine, from peptides and arylamides.. Functionally, cotranslationally removes the N-terminal methionine from nascent proteins. The N-terminal methionine is often cleaved when the second residue in the primary sequence is small and uncharged (Met-Ala-, Cys, Gly, Pro, Ser, Thr, or Val). Protects eukaryotic initiation factor EIF2S1 from translation-inhibiting phosphorylation by inhibitory kinases such as EIF2AK2/PKR and EIF2AK1/HCR. Plays a critical role in the regulation of protein synthesis. This Mus musculus (Mouse) protein is Methionine aminopeptidase 2 (Metap2).